We begin with the raw amino-acid sequence, 679 residues long: PHD finger protein PERSISTENT TAPETAL CELL 1 (679 aa).

The PHD-type zinc finger occupies 620–670 (VVDCACGAVDDDGERMACCDICEAWQHTRCAGIADTEDAPHVFLCSRCDND).

In terms of biological role, probable transcriptional activator required for tapetal programmed cell death (PCD) and degeneration, and pollen development in anthers. This chain is PHD finger protein PERSISTENT TAPETAL CELL 1, found in Oryza sativa subsp. japonica (Rice).